The primary structure comprises 180 residues: MGILIPAWVDDRLVPVDKLEAHEKGLKHKAVSVFAVRDMDILIQRRALGKYHTPGLWANTCCTHPDWDESASTCAVRRLREELGITGLYPEYRHRLEYHADVGNGMVENEVVDVFLAHVRGPLQVVPNPDEVMEIRWIGYHDLLAEVQRYPERFTPWLKIYLHHHADTIFGPDLIISAKA.

2 residues coordinate Mn(2+): His-22 and His-28. Positions 26 to 160 (LKHKAVSVFA…PERFTPWLKI (135 aa)) constitute a Nudix hydrolase domain. The active site involves Cys-62. Residue Cys-62 coordinates Mg(2+). His-64 contacts Mn(2+). Glu-82 contributes to the Mg(2+) binding site. Residues Glu-108 and Glu-110 each coordinate Mn(2+). Residue Glu-110 is part of the active site.

This sequence belongs to the IPP isomerase type 1 family. Requires Mg(2+) as cofactor. Mn(2+) is required as a cofactor.

It localises to the cytoplasm. It catalyses the reaction isopentenyl diphosphate = dimethylallyl diphosphate. It participates in isoprenoid biosynthesis; dimethylallyl diphosphate biosynthesis; dimethylallyl diphosphate from isopentenyl diphosphate: step 1/1. In terms of biological role, catalyzes the 1,3-allylic rearrangement of the homoallylic substrate isopentenyl (IPP) to its highly electrophilic allylic isomer, dimethylallyl diphosphate (DMAPP). This is Isopentenyl-diphosphate Delta-isomerase from Ruegeria pomeroyi (strain ATCC 700808 / DSM 15171 / DSS-3) (Silicibacter pomeroyi).